Consider the following 566-residue polypeptide: UvrABC system protein C (566 aa).

Positions 16–93 constitute a GIY-YIG domain; it reads EKPGVYLFKK…IQQYKPRYNV (78 aa). One can recognise a UVR domain in the interval 199 to 234; sequence AEVLPKLYEKIEEFSKELMFEKCAHIRDQIIALENL.

Belongs to the UvrC family. As to quaternary structure, interacts with UvrB in an incision complex.

The protein resides in the cytoplasm. The UvrABC repair system catalyzes the recognition and processing of DNA lesions. UvrC both incises the 5' and 3' sides of the lesion. The N-terminal half is responsible for the 3' incision and the C-terminal half is responsible for the 5' incision. The sequence is that of UvrABC system protein C from Aquifex aeolicus (strain VF5).